The primary structure comprises 620 residues: Translation initiation factor IF-2 (620 aa).

The tr-type G domain maps to E119–L288. The G1 stretch occupies residues G128 to T135. G128–T135 lines the GTP pocket. Residues G153 to A157 form a G2 region. Residues D175–G178 form a G3 region. GTP is bound by residues D175 to H179 and N229 to D232. The interval N229–D232 is G4. The G5 stretch occupies residues S265–I267.

Belongs to the TRAFAC class translation factor GTPase superfamily. Classic translation factor GTPase family. IF-2 subfamily.

The protein localises to the cytoplasm. Its function is as follows. One of the essential components for the initiation of protein synthesis. Protects formylmethionyl-tRNA from spontaneous hydrolysis and promotes its binding to the 30S ribosomal subunits. Also involved in the hydrolysis of GTP during the formation of the 70S ribosomal complex. In Mycoplasma mycoides subsp. mycoides SC (strain CCUG 32753 / NCTC 10114 / PG1), this protein is Translation initiation factor IF-2.